A 152-amino-acid polypeptide reads, in one-letter code: Xanthine-guanine phosphoribosyltransferase (152 aa).

5-phospho-alpha-D-ribose 1-diphosphate is bound by residues 37-38 (RG), Arg-69, and 88-96 (DDLVDTGGT). Residue Arg-69 participates in GMP binding. Asp-89 lines the Mg(2+) pocket. Residues Asp-92 and Ile-135 each contribute to the guanine site. Positions 92 and 135 each coordinate xanthine. Residues 92–96 (DTGGT) and 134–135 (WI) contribute to the GMP site.

It belongs to the purine/pyrimidine phosphoribosyltransferase family. XGPT subfamily. As to quaternary structure, homotetramer. Requires Mg(2+) as cofactor.

The protein resides in the cell inner membrane. It catalyses the reaction GMP + diphosphate = guanine + 5-phospho-alpha-D-ribose 1-diphosphate. The enzyme catalyses XMP + diphosphate = xanthine + 5-phospho-alpha-D-ribose 1-diphosphate. The catalysed reaction is IMP + diphosphate = hypoxanthine + 5-phospho-alpha-D-ribose 1-diphosphate. It participates in purine metabolism; GMP biosynthesis via salvage pathway; GMP from guanine: step 1/1. Its pathway is purine metabolism; XMP biosynthesis via salvage pathway; XMP from xanthine: step 1/1. Functionally, purine salvage pathway enzyme that catalyzes the transfer of the ribosyl-5-phosphate group from 5-phospho-alpha-D-ribose 1-diphosphate (PRPP) to the N9 position of the 6-oxopurines guanine and xanthine to form the corresponding ribonucleotides GMP (guanosine 5'-monophosphate) and XMP (xanthosine 5'-monophosphate), with the release of PPi. To a lesser extent, also acts on hypoxanthine. The protein is Xanthine-guanine phosphoribosyltransferase of Shigella boydii serotype 18 (strain CDC 3083-94 / BS512).